We begin with the raw amino-acid sequence, 63 residues long: Translational regulator CsrA (63 aa).

It belongs to the CsrA/RsmA family. Homodimer; the beta-strands of each monomer intercalate to form a hydrophobic core, while the alpha-helices form wings that extend away from the core.

It localises to the cytoplasm. Functionally, a key translational regulator that binds mRNA to regulate translation initiation and/or mRNA stability. Mediates global changes in gene expression, shifting from rapid growth to stress survival by linking envelope stress, the stringent response and the catabolite repression systems. Usually binds in the 5'-UTR; binding at or near the Shine-Dalgarno sequence prevents ribosome-binding, repressing translation, binding elsewhere in the 5'-UTR can activate translation and/or stabilize the mRNA. Its function is antagonized by small RNA(s). This chain is Translational regulator CsrA, found in Haemophilus influenzae (strain 86-028NP).